Here is a 315-residue protein sequence, read N- to C-terminus: Methionyl-tRNA formyltransferase (315 aa).

Residue 113–116 (SLLP) coordinates (6S)-5,6,7,8-tetrahydrofolate.

The protein belongs to the Fmt family.

It carries out the reaction L-methionyl-tRNA(fMet) + (6R)-10-formyltetrahydrofolate = N-formyl-L-methionyl-tRNA(fMet) + (6S)-5,6,7,8-tetrahydrofolate + H(+). Functionally, attaches a formyl group to the free amino group of methionyl-tRNA(fMet). The formyl group appears to play a dual role in the initiator identity of N-formylmethionyl-tRNA by promoting its recognition by IF2 and preventing the misappropriation of this tRNA by the elongation apparatus. The sequence is that of Methionyl-tRNA formyltransferase from Escherichia fergusonii (strain ATCC 35469 / DSM 13698 / CCUG 18766 / IAM 14443 / JCM 21226 / LMG 7866 / NBRC 102419 / NCTC 12128 / CDC 0568-73).